The primary structure comprises 606 residues: NADH-ubiquinone oxidoreductase chain 5 (606 aa).

15 helical membrane-spanning segments follow: residues 4 to 24 (FSSL…MMSL), 43 to 63 (AFIT…ELII), 87 to 107 (MMFT…SMWY), 117 to 137 (FFKY…ANNL), 140 to 160 (LFIG…WWYG), 171 to 191 (AVLY…WFLT), 213 to 233 (LIGL…HPWL), 241 to 261 (TPVS…FLLI), 272 to 292 (FIQS…AMCA), 310 to 330 (LGLM…LHIC), 366 to 386 (MPFT…MPFL), 413 to 433 (LIAT…ALLG), 457 to 477 (LLIG…PTTI), 482 to 502 (MPYY…ILAL), and 582 to 602 (GLIK…MMLF).

In terms of assembly, core subunit of respiratory chain NADH dehydrogenase (Complex I) which is composed of 45 different subunits.

It is found in the mitochondrion inner membrane. It carries out the reaction a ubiquinone + NADH + 5 H(+)(in) = a ubiquinol + NAD(+) + 4 H(+)(out). Its function is as follows. Core subunit of the mitochondrial membrane respiratory chain NADH dehydrogenase (Complex I) which catalyzes electron transfer from NADH through the respiratory chain, using ubiquinone as an electron acceptor. Essential for the catalytic activity and assembly of complex I. The protein is NADH-ubiquinone oxidoreductase chain 5 (MT-ND5) of Bos indicus (Zebu).